Reading from the N-terminus, the 327-residue chain is MKEISNIKVKIESGTKYTTDHGFHAVKDGIRNKKENSVHIRKPEWLKVKKQDSKEYLKVKSITKKHRLSTVCEEAKCPNINECWSHGTATIMLMGAVCTRACKFCSVDTGNPKGWLDKEEPQNTAESVKLMNLEYVVLTSVDRDDLVDGGAGHYAATITAIKNLDENIKVEALTPDFAGVKENVDKIINTKVDVIAQNIETVERLTHPVRDPRAGYWQTLEFLRYVKQKSPNILTKTSIMVGLGETDEEIYKTMDDARSVGVDIITLGQYMQPTKHHLSVERFVTPQQFEEYRRVGLEKGFLEVASGPMVRSSYRADRVFKRNNLDL.

[4Fe-4S] cluster is bound by residues cysteine 72, cysteine 77, cysteine 83, cysteine 98, cysteine 102, cysteine 105, and serine 313. Residues 83-302 form the Radical SAM core domain; the sequence is CWSHGTATIM…RRVGLEKGFL (220 aa).

The protein belongs to the radical SAM superfamily. Lipoyl synthase family. Requires [4Fe-4S] cluster as cofactor.

The protein resides in the cytoplasm. It carries out the reaction [[Fe-S] cluster scaffold protein carrying a second [4Fe-4S](2+) cluster] + N(6)-octanoyl-L-lysyl-[protein] + 2 oxidized [2Fe-2S]-[ferredoxin] + 2 S-adenosyl-L-methionine + 4 H(+) = [[Fe-S] cluster scaffold protein] + N(6)-[(R)-dihydrolipoyl]-L-lysyl-[protein] + 4 Fe(3+) + 2 hydrogen sulfide + 2 5'-deoxyadenosine + 2 L-methionine + 2 reduced [2Fe-2S]-[ferredoxin]. Its pathway is protein modification; protein lipoylation via endogenous pathway; protein N(6)-(lipoyl)lysine from octanoyl-[acyl-carrier-protein]: step 2/2. In terms of biological role, catalyzes the radical-mediated insertion of two sulfur atoms into the C-6 and C-8 positions of the octanoyl moiety bound to the lipoyl domains of lipoate-dependent enzymes, thereby converting the octanoylated domains into lipoylated derivatives. In Francisella philomiragia subsp. philomiragia (strain ATCC 25017 / CCUG 19701 / FSC 153 / O#319-036), this protein is Lipoyl synthase.